Consider the following 506-residue polypeptide: Ubiquitin carboxyl-terminal hydrolase 22 (506 aa).

Residues 4-121 form a UBP-type zinc finger; that stretch reads AGCSHVNGFK…KEEQRKAWKL (118 aa). The Zn(2+) site is built by Cys-6, His-8, Cys-46, Cys-49, Cys-59, Cys-62, Cys-67, His-72, His-76, His-82, Cys-95, and Cys-98. In terms of domain architecture, USP spans 159-501; it reads RGLINLGNTC…EGYLLFYHKQ (343 aa). The Nucleophile role is filled by Cys-168. His-460 serves as the catalytic Proton acceptor.

This sequence belongs to the peptidase C19 family. UBP8 subfamily. As to quaternary structure, component of some SAGA transcription coactivator-HAT complexes.

It localises to the nucleus. It carries out the reaction Thiol-dependent hydrolysis of ester, thioester, amide, peptide and isopeptide bonds formed by the C-terminal Gly of ubiquitin (a 76-residue protein attached to proteins as an intracellular targeting signal).. Its function is as follows. Histone deubiquitinating component of the transcription regulatory histone acetylation (HAT) complex SAGA. Catalyzes the deubiquitination of both histones H2A and H2B, thereby acting as a coactivator. Recruited to specific gene promoters by activators, where it is required for transcription. In Danio rerio (Zebrafish), this protein is Ubiquitin carboxyl-terminal hydrolase 22 (usp22).